The primary structure comprises 34 residues: Cycloamanide E proprotein (34 aa).

The propeptide occupies 1-10 (MSDINAARLP). A cross-link (cyclopeptide (Ser-Pro)) is located at residues 11–17 (SFFFPVP). The propeptide occupies 18-34 (CISDDIEMVLTRGESLC).

The protein belongs to the MSDIN fungal toxin family. Processed by the macrocyclase-peptidase enzyme POPB to yield a cyclic decapeptide. POPB first removes 10 residues from the N-terminus. Conformational trapping of the remaining peptide forces the enzyme to release this intermediate rather than proceed to macrocyclization. The enzyme rebinds the remaining peptide in a different conformation and catalyzes macrocyclization of the N-terminal 7 residues.

Cyclic heptapeptide that belongs to the MSDIN-like toxin family responsible for a large number of food poisoning cases and deaths. Cycloaminide E is structurally related to other cycloamanides that are non-toxic to mammals but show immunosuppressive activity. This is Cycloamanide E proprotein from Amanita phalloides (Death cap).